Reading from the N-terminus, the 87-residue chain is Alpha-elapitoxin-Ls2a (87 aa).

Residues 1 to 21 (MKTLLLTLVVVTIVCLDLGYT) form the signal peptide. Intrachain disulfides connect cysteine 24–cysteine 41, cysteine 34–cysteine 62, cysteine 47–cysteine 51, cysteine 66–cysteine 77, and cysteine 78–cysteine 83.

It belongs to the three-finger toxin family. Long-chain subfamily. Type II alpha-neurotoxin sub-subfamily. Expressed by the venom gland.

It localises to the secreted. Functionally, binds with high affinity to muscular (tested on Torpedo marmorata, Kd=1.6 nM) and neuronal (chimeric alpha-7/CHRNA7, Kd=3 nM) nicotinic acetylcholine receptor (nAChR) and inhibits acetylcholine from binding to the receptor, thereby impairing neuromuscular and neuronal transmission. Also shows a very weak inhibition on GABA(A) receptors. The toxin (10 uM) inhibits 83% of current in channels composed of alpha-1-beta-3-gamma-2 (GABRA1-GABRB3-GABRG2) subunits, 39% of current in channels composed of alpha-2-beta-2-gamma-2 (GABRA2-GABRB2-GABRG2) subunits, and 33% of current in channels composed of alpha-5-beta-2-gamma-2 (GABRA5-GABRB2-GABRG2) subunits. The polypeptide is Alpha-elapitoxin-Ls2a (Laticauda semifasciata (Black-banded sea krait)).